The chain runs to 1254 residues: Unconventional myosin-VI (1254 aa).

A Myosin N-terminal SH3-like domain is found at glutamate 2–glutamate 53. A Myosin motor domain is found at lysine 57–lysine 772. Glycine 151–threonine 158 serves as a coordination point for ATP. The residue at position 267 (serine 267) is a Phosphoserine. The interval tyrosine 273–phenylalanine 317 is responsible for slow ATPase activity. At threonine 406 the chain carries Phosphothreonine. Serine 605 carries the post-translational modification Phosphoserine. The tract at residues phenylalanine 666–asparagine 673 is actin-binding. Residues lysine 783–isoleucine 811 are required for binding calmodulin. The IQ domain maps to arginine 814–lysine 843. Positions proline 836–lysine 917 are three-helix bundle. The segment at lysine 918–glutamate 985 is SAH. The tract at residues glutamate 935–arginine 956 is disordered. Serine 1026 carries the phosphoserine modification. The interval arginine 1037–alanine 1245 is interaction with TAX1BP1 and CALCOCO2/NDP52. Residues arginine 1085–leucine 1087 are interaction with OPTN. The disordered stretch occupies residues lysine 1096–glutamine 1117. Residues glutamine 1117–alanine 1245 are interaction with TOM1.

The protein belongs to the TRAFAC class myosin-kinesin ATPase superfamily. Myosin family. Homodimer; dimerization seems to implicate the unfolding of the three-helix bundle region creating an additional calmodulin binding site, and cargo binding. Component of the DISP/DOCK7-induced septin displacement complex, at least composed of DOCK7, LRCH3 and MYO6. Able to function as a monomer under specific conditions in vitro. Forms a complex with CFTR and DAB2 in the apical membrane of epithelial cells. Binding to calmodulin through a unique insert, not found in other myosins, located in the neck region between the motor domain and the IQ domain appears to contribute to the directionality reversal. This interaction occurs only if the C-terminal lobe of calmodulin is occupied by calcium. Interaction with F-actin/ACTN1 occurs only at the apical brush border domain of the proximal tubule cells. Interacts with DAB2. In vitro, the C-terminal globular tail binds a C-terminal region of DAB2. Interacts with CFTR. Interacts with CABP5. Interacts (via residues 1117-1245) with TOM1 (via residues 392-463). Interacts (via residues 1060-1285) with OPTN. Interacts (via residues 1060-1285) with TAX1BP1 and CALCOCO2/NDP52. Interacts with TOM1L2. Interacts with CLIC5; may work together in a complex which also includes RDX and MYO6 to stabilize linkages between the plasma membrane and subjacent actin cytoskeleton at the base of stereocilia. Post-translationally, phosphorylation in the motor domain, induced by EGF, results in translocation of MYO6 from the cell surface to membrane ruffles and affects F-actin dynamics. Phosphorylated in vitro by p21-activated kinase (PAK). In terms of tissue distribution, expressed in all tissues examined including kidney cortex, intestinal mucosa, liver, lung, heart, jowl muscle, brain cortex and medulla, and in the epithelial cell line, LLC-PK1 (at protein level). In the kidney, located to the brush border of adult kidney proximal tubule cells.

It localises to the golgi apparatus. The protein resides in the trans-Golgi network membrane. Its subcellular location is the nucleus. The protein localises to the cytoplasm. It is found in the perinuclear region. It localises to the membrane. The protein resides in the clathrin-coated pit. Its subcellular location is the cytoplasmic vesicle. The protein localises to the clathrin-coated vesicle. It is found in the cell projection. It localises to the filopodium. The protein resides in the ruffle membrane. Its subcellular location is the microvillus. The protein localises to the cytosol. Myosins are actin-based motor molecules with ATPase activity. Unconventional myosins serve in intracellular movements. Myosin 6 is a reverse-direction motor protein that moves towards the minus-end of actin filaments. Has slow rate of actin-activated ADP release due to weak ATP binding. Functions in a variety of intracellular processes such as vesicular membrane trafficking and cell migration. Required for the structural integrity of the Golgi apparatus via the p53-dependent pro-survival pathway. Appears to be involved in a very early step of clathrin-mediated endocytosis in polarized epithelial cells. Together with TOM1, mediates delivery of endocytic cargo to autophagosomes thereby promoting autophagosome maturation and driving fusion with lysosomes. Links TOM1 with autophagy receptors, such as TAX1BP1; CALCOCO2/NDP52 and OPTN. May act as a regulator of F-actin dynamics. As part of the DISP complex, may regulate the association of septins with actin and thereby regulate the actin cytoskeleton. May play a role in transporting DAB2 from the plasma membrane to specific cellular targets. May play a role in the extension and network organization of neurites. Required for structural integrity of inner ear hair cells. Required for the correct localization of CLIC5 and RDX at the stereocilium base. Modulates RNA polymerase II-dependent transcription. The polypeptide is Unconventional myosin-VI (MYO6) (Sus scrofa (Pig)).